The primary structure comprises 117 residues: Large ribosomal subunit protein uL18 (117 aa).

It belongs to the universal ribosomal protein uL18 family. As to quaternary structure, part of the 50S ribosomal subunit; part of the 5S rRNA/L5/L18/L25 subcomplex. Contacts the 5S and 23S rRNAs.

Its function is as follows. This is one of the proteins that bind and probably mediate the attachment of the 5S RNA into the large ribosomal subunit, where it forms part of the central protuberance. This Enterobacter sp. (strain 638) protein is Large ribosomal subunit protein uL18.